Consider the following 409-residue polypeptide: G2/mitotic-specific cyclin-B (409 aa).

Belongs to the cyclin family. Cyclin AB subfamily. As to quaternary structure, interacts with the CDK1 protein kinase to form a serine/threonine kinase holoenzyme complex also known as maturation promoting factor (MPF). The cyclin subunit imparts substrate specificity to the complex.

Essential for the control of the cell cycle at the G2/M (mitosis) transition. The chain is G2/mitotic-specific cyclin-B from Arbacia punctulata (Punctuate sea urchin).